A 480-amino-acid chain; its full sequence is 3-isopropylmalate dehydratase large subunit (480 aa).

Residues Cys361, Cys421, and Cys424 each contribute to the [4Fe-4S] cluster site.

This sequence belongs to the aconitase/IPM isomerase family. LeuC type 1 subfamily. As to quaternary structure, heterodimer of LeuC and LeuD. Requires [4Fe-4S] cluster as cofactor.

The catalysed reaction is (2R,3S)-3-isopropylmalate = (2S)-2-isopropylmalate. It participates in amino-acid biosynthesis; L-leucine biosynthesis; L-leucine from 3-methyl-2-oxobutanoate: step 2/4. Its function is as follows. Catalyzes the isomerization between 2-isopropylmalate and 3-isopropylmalate, via the formation of 2-isopropylmaleate. The protein is 3-isopropylmalate dehydratase large subunit of Corynebacterium diphtheriae (strain ATCC 700971 / NCTC 13129 / Biotype gravis).